Reading from the N-terminus, the 350-residue chain is Homeobox-leucine zipper protein HOX5 (350 aa).

The segment at residues Ala83–Gln142 is a DNA-binding region (homeobox). The segment at Lys141–Lys185 is leucine-zipper. The disordered stretch occupies residues Glu180–Ala254. The segment covering Ser188–Ala198 has biased composition (low complexity).

The protein belongs to the HD-ZIP homeobox family. Class I subfamily. As to quaternary structure, homodimer. May form a heterodimer with HOX4. Expressed in seedlings, roots, leaves, nodes, internodes, flowers and embryo.

Its subcellular location is the nucleus. Probable transcription activator that binds to the DNA sequence 5'-CAAT[AT]ATTG-3'. The polypeptide is Homeobox-leucine zipper protein HOX5 (HOX5) (Oryza sativa subsp. indica (Rice)).